The following is a 124-amino-acid chain: UPF0225 protein SCO1677 (124 aa).

This sequence belongs to the UPF0225 family.

In Streptomyces coelicolor (strain ATCC BAA-471 / A3(2) / M145), this protein is UPF0225 protein SCO1677.